The following is a 238-amino-acid chain: Orotidine 5'-phosphate decarboxylase (238 aa).

Residues Asp-10, Lys-32, 59–68, Thr-122, Arg-184, Gln-193, Gly-213, and Arg-214 contribute to the substrate site; that span reads DLKLHDIPNT. Lys-61 serves as the catalytic Proton donor.

It belongs to the OMP decarboxylase family. Type 1 subfamily. As to quaternary structure, homodimer.

The catalysed reaction is orotidine 5'-phosphate + H(+) = UMP + CO2. Its pathway is pyrimidine metabolism; UMP biosynthesis via de novo pathway; UMP from orotate: step 2/2. Catalyzes the decarboxylation of orotidine 5'-monophosphate (OMP) to uridine 5'-monophosphate (UMP). In Bacillus cereus (strain ZK / E33L), this protein is Orotidine 5'-phosphate decarboxylase.